We begin with the raw amino-acid sequence, 1180 residues long: Lon protease homolog 2, peroxisomal (1180 aa).

In terms of domain architecture, Lon N-terminal spans 19-366 (LPTCKLDSNL…ELINMINQLI (348 aa)). A disordered region spans residues 416–465 (PISNRGNIKSFNNSENGNNNKTNGSGITSRRPKSNEDGGEVYDEEDDDEE). A compositionally biased stretch (low complexity) spans 422–444 (NIKSFNNSENGNNNKTNGSGITS). Residues 452–465 (DGGEVYDEEDDDEE) are compositionally biased toward acidic residues. Residue 667–674 (GPPGTGKT) coordinates ATP. One can recognise a Lon proteolytic domain in the interval 924–1163 (NSRVGIVNGL…YDVMKILWGE (240 aa)). Active-site residues include serine 1032 and lysine 1075.

Belongs to the peptidase S16 family.

The protein localises to the peroxisome matrix. The catalysed reaction is Hydrolysis of proteins in presence of ATP.. Functionally, ATP-dependent serine protease that mediates the selective degradation of misfolded and unassembled polypeptides in the peroxisomal matrix. Necessary for type 2 peroxisome targeting signal (PTS2)-containing protein processing and facilitates peroxisome matrix protein import. This chain is Lon protease homolog 2, peroxisomal, found in Scheffersomyces stipitis (strain ATCC 58785 / CBS 6054 / NBRC 10063 / NRRL Y-11545) (Yeast).